Consider the following 369-residue polypeptide: Opsin Rh6 (369 aa).

Residues 1-46 (MASLHPPSFAYMRDGRNLSLAESVPAEIMHMVDPYWYQWPPLEPMW) lie on the Extracellular side of the membrane. An N-linked (GlcNAc...) asparagine glycan is attached at Asn17. Residues 47–71 (FGIIGFVIAILGTMSLAGNFIVMYI) form a helical membrane-spanning segment. Topologically, residues 72–83 (FTSSKGLRTPSN) are cytoplasmic. A helical membrane pass occupies residues 84–109 (MFVVNLAFSDFMMMFTMFPPVVLNGF). Residues 110–123 (YGTWIMGPFLCELY) lie on the Extracellular side of the membrane. The cysteines at positions 120 and 197 are disulfide-linked. Residues 124–143 (GMFGSLFGCVSIWSMTLIAY) traverse the membrane as a helical segment. Residues 144–162 (DRYCVIVKGMARKPLTATA) lie on the Cytoplasmic side of the membrane. The helical transmembrane segment at 163 to 186 (AVLRLMVVWTICGAWALMPLFGWN) threads the bilayer. Topologically, residues 187–210 (RYVPEGNMTACGTDYFAKDWWNRS) are extracellular. Asn193 and Asn208 each carry an N-linked (GlcNAc...) asparagine glycan. A helical membrane pass occupies residues 211–238 (YIIVYSLWVYLTPLLTIIFSYWHIMKAV). The Cytoplasmic segment spans residues 239–274 (AAHEKAMREQAKKMNVASLRNSEADKSKAIEIKLAK). A helical membrane pass occupies residues 275–298 (VALTTISLWFFAWTPYTIINYAGI). At 299-305 (FESMHLS) the chain is on the extracellular side. Residues 306-330 (PLSTICGSVFAKANAVCNPIVYGLS) form a helical membrane-spanning segment. At Lys317 the chain carries N6-(retinylidene)lysine. Over 331–369 (HPKYKQVLREKMPCLACGKDDLTSDSRTQATAEISESQA) the chain is Cytoplasmic.

It belongs to the G-protein coupled receptor 1 family. Opsin subfamily. Phosphorylated on some or all of the serine and threonine residues present in the C-terminal region. As to expression, each Drosophila eye is composed of 800 facets or ommatidia. Each ommatidium contains 8 photoreceptor cells (R1-R8), the R1 to R6 cells are outer cells, while R7 and R8 are inner cells. Rh6 is expressed in a subset of R8 cells, most likely expressed in the subset of R8 cells paired with Rh4-expressing R7 cells (R7y).

It localises to the membrane. Functionally, visual pigments are the light-absorbing molecules that mediate vision. They consist of an apoprotein, opsin, covalently linked to cis-retinal. In Drosophila melanogaster (Fruit fly), this protein is Opsin Rh6 (Rh6).